A 287-amino-acid chain; its full sequence is Bifunctional protein FolD (287 aa).

NADP(+) contacts are provided by residues 160-162 (GRS), S189, and T230.

This sequence belongs to the tetrahydrofolate dehydrogenase/cyclohydrolase family. Homodimer.

The enzyme catalyses (6R)-5,10-methylene-5,6,7,8-tetrahydrofolate + NADP(+) = (6R)-5,10-methenyltetrahydrofolate + NADPH. It carries out the reaction (6R)-5,10-methenyltetrahydrofolate + H2O = (6R)-10-formyltetrahydrofolate + H(+). Its pathway is one-carbon metabolism; tetrahydrofolate interconversion. Functionally, catalyzes the oxidation of 5,10-methylenetetrahydrofolate to 5,10-methenyltetrahydrofolate and then the hydrolysis of 5,10-methenyltetrahydrofolate to 10-formyltetrahydrofolate. The sequence is that of Bifunctional protein FolD from Chlamydia caviae (strain ATCC VR-813 / DSM 19441 / 03DC25 / GPIC) (Chlamydophila caviae).